A 161-amino-acid polypeptide reads, in one-letter code: Regulator of ribonuclease activity A (161 aa).

This sequence belongs to the RraA family. As to quaternary structure, homotrimer. Binds to both RNA-binding sites in the C-terminal region of Rne and to RhlB.

It localises to the cytoplasm. Its function is as follows. Globally modulates RNA abundance by binding to RNase E (Rne) and regulating its endonucleolytic activity. Can modulate Rne action in a substrate-dependent manner by altering the composition of the degradosome. Modulates RNA-binding and helicase activities of the degradosome. The sequence is that of Regulator of ribonuclease activity A from Pectobacterium atrosepticum (strain SCRI 1043 / ATCC BAA-672) (Erwinia carotovora subsp. atroseptica).